The primary structure comprises 49 residues: Small, acid-soluble spore protein O (49 aa).

The tract at residues 1–49 (MGKRKANHTISGMNAASAQGQGTGYNEEFANEPFTPAERQNNKKRKKNQ) is disordered. The segment covering 8 to 20 (HTISGMNAASAQG) has biased composition (polar residues).

This sequence belongs to the SspO family.

It localises to the spore core. The protein is Small, acid-soluble spore protein O of Bacillus cereus (strain ATCC 14579 / DSM 31 / CCUG 7414 / JCM 2152 / NBRC 15305 / NCIMB 9373 / NCTC 2599 / NRRL B-3711).